The primary structure comprises 311 residues: Putative mitochondrial transporter UCP3 (311 aa).

Residues 1–10 (MVGLQPSERP) are Mitochondrial intermembrane-facing. Residues 11 to 32 (PTTSVKFLAAGTAACFADLLTF) traverse the membrane as a helical segment. Solcar repeat units lie at residues 11–105 (PTTS…VKQF), 114–205 (SSII…IKEK), and 214–299 (DNFP…MKRA). The Mitochondrial matrix portion of the chain corresponds to 33 to 76 (PLDTAKVRLQIQGENQAALAARSAQYRGVLGTILTMVRTEGPRS). A helical transmembrane segment spans residues 77–99 (LYSGLVAGLQRQMSFASIRIGLY). The Mitochondrial intermembrane segment spans residues 100–119 (DSVKQFYTPKGSDHSSIITR). A helical membrane pass occupies residues 120 to 136 (ILAGCTTGAMAVTCAQP). The Mitochondrial matrix segment spans residues 137 to 182 (TDVVKIRFQASMHTGLGGNRKYSGTMDAYRTIAREEGVRGLWKGIL). A helical transmembrane segment spans residues 183 to 199 (PNITRNAIVNCGEMVTY). The Mitochondrial intermembrane segment spans residues 200 to 216 (DIIKEKLLDYHLLTDNF). Residues 217–236 (PCHFVSAFGAGFCATLVASP) traverse the membrane as a helical segment. Residues 237–270 (VDVVKTRYMNSPPGQYHSPFDCMLKMVTQEGPTA) lie on the Mitochondrial matrix side of the membrane. A helical membrane pass occupies residues 271-293 (FYKGFTPSFLRLGSWNVVMFVTY). The interval 278–300 (SFLRLGSWNVVMFVTYEQMKRAL) is purine nucleotide binding. Topologically, residues 294–311 (EQMKRALMKVQMLRDSPF) are mitochondrial intermembrane.

This sequence belongs to the mitochondrial carrier (TC 2.A.29) family. In terms of assembly, interacts with HAX1; the interaction is direct and calcium-dependent.

The protein localises to the mitochondrion inner membrane. In terms of biological role, putative transmembrane transporter that plays a role in mitochondrial metabolism via an as yet unclear mechanism. Originally, this mitochondrial protein was thought to act as a proton transmembrane transporter from the mitochondrial intermembrane space into the matrix, causing proton leaks through the inner mitochondrial membrane, thereby uncoupling mitochondrial membrane potential generation from ATP synthesis. However, this function is controversial and uncoupling may not be the function, or at least not the main function, but rather a consequence of more conventional metabolite transporter activity. The protein is Putative mitochondrial transporter UCP3 of Bos taurus (Bovine).